The primary structure comprises 392 residues: MRDLKTELEQRRAKGLYRSRRVLEGRQTPEQVVDGRQVIAFCSNDYLGLASHPKVIAALRKGASEYGAGAGAAHLVNGHTRAHHQLEEELAAFTNRERALLFSTGYMANLGVAQALLGRSDHVLEDRLNHASLIDAGLLSGARFQRYRHATAVDLAQRLAGLGQTGERLVLTDGVFSMDGNLAPLPELASICTAHQAWLLVDDAHGLGVLGETGAGSLEHFGLSQQQVPILMGTLGKAFGTAGAFVAGSEALIETLIQSARTYVYTTAMPAAMAEATRAALRIVQAEGKRREKLRSLVARFRAGAGQLGVRLMDSQTPIQPLVIGDAVEALRLSERLLEQDLLVPAIRPPTVPEGTARLRVTLSAAHTEAQVDRLLEALDRSMRGSEDVGSR.

Residue Arg18 coordinates substrate. Residue Gly105–Tyr106 coordinates pyridoxal 5'-phosphate. His130 lines the substrate pocket. Residues Ser177, His205, and Thr234 each contribute to the pyridoxal 5'-phosphate site. Residue Lys237 is modified to N6-(pyridoxal phosphate)lysine. Thr351 contributes to the substrate binding site.

It belongs to the class-II pyridoxal-phosphate-dependent aminotransferase family. BioF subfamily. As to quaternary structure, homodimer. The cofactor is pyridoxal 5'-phosphate.

It carries out the reaction 6-carboxyhexanoyl-[ACP] + L-alanine + H(+) = (8S)-8-amino-7-oxononanoate + holo-[ACP] + CO2. The protein operates within cofactor biosynthesis; biotin biosynthesis. Functionally, catalyzes the decarboxylative condensation of pimeloyl-[acyl-carrier protein] and L-alanine to produce 8-amino-7-oxononanoate (AON), [acyl-carrier protein], and carbon dioxide. The polypeptide is 8-amino-7-oxononanoate synthase (Thioalkalivibrio sulfidiphilus (strain HL-EbGR7)).